The following is a 362-amino-acid chain: Phosphoserine aminotransferase (362 aa).

Arg43 is a binding site for L-glutamate. Pyridoxal 5'-phosphate contacts are provided by residues 77–78 (AR), Trp103, Thr153, Asp173, and Gln196. Lys197 bears the N6-(pyridoxal phosphate)lysine mark.

It belongs to the class-V pyridoxal-phosphate-dependent aminotransferase family. SerC subfamily. Homodimer. Requires pyridoxal 5'-phosphate as cofactor.

It is found in the cytoplasm. It catalyses the reaction O-phospho-L-serine + 2-oxoglutarate = 3-phosphooxypyruvate + L-glutamate. It carries out the reaction 4-(phosphooxy)-L-threonine + 2-oxoglutarate = (R)-3-hydroxy-2-oxo-4-phosphooxybutanoate + L-glutamate. The protein operates within amino-acid biosynthesis; L-serine biosynthesis; L-serine from 3-phospho-D-glycerate: step 2/3. Its pathway is cofactor biosynthesis; pyridoxine 5'-phosphate biosynthesis; pyridoxine 5'-phosphate from D-erythrose 4-phosphate: step 3/5. Catalyzes the reversible conversion of 3-phosphohydroxypyruvate to phosphoserine and of 3-hydroxy-2-oxo-4-phosphonooxybutanoate to phosphohydroxythreonine. The chain is Phosphoserine aminotransferase from Legionella pneumophila (strain Lens).